We begin with the raw amino-acid sequence, 86 residues long: Small ribosomal subunit protein bS20 (86 aa).

It belongs to the bacterial ribosomal protein bS20 family.

Binds directly to 16S ribosomal RNA. The sequence is that of Small ribosomal subunit protein bS20 from Buchnera aphidicola subsp. Cinara cedri (strain Cc).